Reading from the N-terminus, the 541-residue chain is Eukaryotic translation initiation factor 3 subunit L (541 aa).

Positions 308 to 516 (TFSDILLYIQ…IHIADTKVSH (209 aa)) constitute a PCI domain.

This sequence belongs to the eIF-3 subunit L family. Component of the eukaryotic translation initiation factor 3 (eIF-3) complex. The eIF-3 complex interacts with pix.

The protein resides in the cytoplasm. Functionally, component of the eukaryotic translation initiation factor 3 (eIF-3) complex, which is involved in protein synthesis of a specialized repertoire of mRNAs and, together with other initiation factors, stimulates binding of mRNA and methionyl-tRNAi to the 40S ribosome. The eIF-3 complex specifically targets and initiates translation of a subset of mRNAs involved in cell proliferation. This is Eukaryotic translation initiation factor 3 subunit L from Drosophila persimilis (Fruit fly).